The primary structure comprises 634 residues: 1-deoxy-D-xylulose-5-phosphate synthase (634 aa).

Residues histidine 74 and 115–117 each bind thiamine diphosphate; that span reads AHS. Position 146 (aspartate 146) interacts with Mg(2+). Residues 147-148, asparagine 176, tyrosine 283, and glutamate 365 contribute to the thiamine diphosphate site; that span reads GA. Mg(2+) is bound at residue asparagine 176.

This sequence belongs to the transketolase family. DXPS subfamily. Homodimer. Mg(2+) is required as a cofactor. The cofactor is thiamine diphosphate.

The catalysed reaction is D-glyceraldehyde 3-phosphate + pyruvate + H(+) = 1-deoxy-D-xylulose 5-phosphate + CO2. It participates in metabolic intermediate biosynthesis; 1-deoxy-D-xylulose 5-phosphate biosynthesis; 1-deoxy-D-xylulose 5-phosphate from D-glyceraldehyde 3-phosphate and pyruvate: step 1/1. Functionally, catalyzes the acyloin condensation reaction between C atoms 2 and 3 of pyruvate and glyceraldehyde 3-phosphate to yield 1-deoxy-D-xylulose-5-phosphate (DXP). The protein is 1-deoxy-D-xylulose-5-phosphate synthase of Burkholderia mallei (strain ATCC 23344).